A 638-amino-acid polypeptide reads, in one-letter code: Probable lysine-specific demethylase 4F (638 aa).

A JmjN domain is found at 15 to 57 (IMTFYPTMEEFADFNTYVAYMESQGAHRAGLAKVIPPKEWKAR). Position 133 (Tyr133) interacts with 2-oxoglutarate. The JmjC domain occupies 143–309 (EESTKQWNLG…YGKVASQCSC (167 aa)). Fe cation contacts are provided by His189 and Glu191. Positions 199 and 207 each coordinate 2-oxoglutarate. Zn(2+)-binding residues include Cys235 and His241. Residue Lys242 participates in 2-oxoglutarate binding. His277 serves as a coordination point for Fe cation. Residues Cys307 and Cys309 each coordinate Zn(2+). The interval 426–474 (PCRGCGRGRGRGRGRGRRPRELGTEETTVQSAAKRRLSVGTGSRAPGRK) is disordered. A compositionally biased stretch (basic residues) spans 431-443 (GRGRGRGRGRGRR).

This sequence belongs to the JHDM3 histone demethylase family. Fe(2+) is required as a cofactor.

It localises to the nucleus. The catalysed reaction is N(6),N(6),N(6)-trimethyl-L-lysyl(9)-[histone H3] + 2 2-oxoglutarate + 2 O2 = N(6)-methyl-L-lysyl(9)-[histone H3] + 2 formaldehyde + 2 succinate + 2 CO2. Functionally, probable histone demethylase that specifically demethylates 'Lys-9' of histone H3, thereby playing a central role in histone code. The protein is Probable lysine-specific demethylase 4F of Homo sapiens (Human).